Here is a 467-residue protein sequence, read N- to C-terminus: MASEGDKLWGGRFVGSIDPIMEMFNSSVSYDQRMWSADIRGSQAYVKALEKAGLVSPTEMEHILTGLDQIHEEWSKGTFVLTKADEDIHTANERRLKELIGEPAGKLHTGRSRNDQVVTDMRLWLRDSCSALHLHLTRLIRTMVDRAAIEIDILFPGYTHMQRAQPIRWSHWILSHAVALCRDAERLGELRKRINVLPLGSGAIAGNPLGVDRELLRKELEFDSVSLNSMDATSERDFIAEFLFWASLCMTHLSKMSEDLIIYSTKEFSFVTLSDSYSTGSSLMPQKKNPDSLELIRSKAGRVFGRCSGFLMTLKGLPSTYNKDLQEDKEAMFDVYDTVCAVLQVASGVISTLQINKEGMEKALSPDMLATDIAYYLVRKGMPFRQAHGLSGKVVQLAETKGIALNKLSLEDLKSISPLFSNDVSKVWNYTNSVEQYTAAGGTAKSCVVAQVEQLRTWLKKTQESVI.

Residues serine 27, asparagine 114, and threonine 159 each contribute to the 2-(N(omega)-L-arginino)succinate site. Histidine 160 functions as the Proton acceptor in the catalytic mechanism. Serine 281 serves as the catalytic Proton donor. 2-(N(omega)-L-arginino)succinate is bound by residues asparagine 289, tyrosine 321, glutamine 326, and lysine 329.

Belongs to the lyase 1 family. Argininosuccinate lyase subfamily. As to quaternary structure, homotetramer.

The catalysed reaction is 2-(N(omega)-L-arginino)succinate = fumarate + L-arginine. The protein operates within amino-acid biosynthesis; L-arginine biosynthesis; L-arginine from L-ornithine and carbamoyl phosphate: step 3/3. It functions in the pathway nitrogen metabolism; urea cycle; L-arginine and fumarate from (N(omega)-L-arginino)succinate: step 1/1. The polypeptide is Argininosuccinate lyase (ASL) (Aquarana catesbeiana (American bullfrog)).